Here is a 158-residue protein sequence, read N- to C-terminus: Adenosine 5'-monophosphoramidase HNT1 (158 aa).

Positions 26 to 129 (IFCKIIKSEI…IPKRDEKSGL (104 aa)) constitute an HIT domain. Residues 51–52 (DI), N103, 109–111 (HQE), and 116–118 (HFH) contribute to the AMP site. Positions 114–118 (HVHFH) match the Histidine triad motif motif. Residue H116 is the Tele-AMP-histidine intermediate of the active site.

It belongs to the HINT family. As to quaternary structure, homodimer. Interacts with KIN28. It depends on Mg(2+) as a cofactor.

The enzyme catalyses adenosine 5'-phosphoramidate + H2O = AMP + NH4(+). In terms of biological role, hydrolyzes adenosine 5'-monophosphoramidate substrates such as AMP-morpholidate, AMP-N-alanine methyl ester, AMP-alpha-acetyl lysine methyl ester and AMP-NH2. Plays a role in the regulation of kinase KIN28 function. Essential for growth on galactose media at elevated temperatures. The sequence is that of Adenosine 5'-monophosphoramidase HNT1 from Saccharomyces cerevisiae (strain ATCC 204508 / S288c) (Baker's yeast).